The primary structure comprises 392 residues: Gastricsin (392 aa).

A signal peptide spans 1-16 (MKWMVVALLCLPLLEA). Residues 17-62 (SLLRVPLRKMKSIRETMKEQGVLKDFLKTHKYDPGQKYHFGNFGDY) constitute a propeptide, activation peptide. A Peptidase A1 domain is found at 76-389 (YFGEISIGTP…DMGNNKVGLA (314 aa)). Residue aspartate 94 is part of the active site. Disulfide bonds link cysteine 107–cysteine 112 and cysteine 270–cysteine 275. The active site involves aspartate 280. A disulfide bridge links cysteine 314 with cysteine 347.

The protein belongs to the peptidase A1 family.

It localises to the secreted. The catalysed reaction is More restricted specificity than pepsin A, but shows preferential cleavage at Tyr-|-Xaa bonds. High activity on hemoglobin.. In terms of biological role, hydrolyzes a variety of proteins. The chain is Gastricsin (Pgc) from Rattus norvegicus (Rat).